Here is a 191-residue protein sequence, read N- to C-terminus: Protein DMP10 (191 aa).

4 helical membrane-spanning segments follow: residues 15–35 (FANL…PSFS), 48–68 (LLTI…SFTD), 114–134 (LSFV…ALAV), and 158–178 (LMIK…FAIF).

This sequence belongs to the plant DMP1 protein family. In terms of tissue distribution, restricted to flowers.

The protein resides in the membrane. In terms of biological role, involved in membrane remodeling. The polypeptide is Protein DMP10 (Arabidopsis thaliana (Mouse-ear cress)).